Consider the following 200-residue polypeptide: Small ribosomal subunit protein uS4 (200 aa).

The tract at residues 22–42 (TGKELEKRPYAPGPHGPNQRK) is disordered. The 61-residue stretch at 92-152 (ARLDNLVYRM…EKSNSLVVVK (61 aa)) folds into the S4 RNA-binding domain.

The protein belongs to the universal ribosomal protein uS4 family. As to quaternary structure, part of the 30S ribosomal subunit. Contacts protein S5. The interaction surface between S4 and S5 is involved in control of translational fidelity.

One of the primary rRNA binding proteins, it binds directly to 16S rRNA where it nucleates assembly of the body of the 30S subunit. In terms of biological role, with S5 and S12 plays an important role in translational accuracy. The polypeptide is Small ribosomal subunit protein uS4 (Bacillus cereus (strain B4264)).